The chain runs to 118 residues: NADH-quinone oxidoreductase subunit A 2 (118 aa).

3 consecutive transmembrane segments (helical) span residues 5–25 (YLPI…SLVF), 60–80 (FYII…LYPW), and 87–107 (LGMF…VGYI).

Belongs to the complex I subunit 3 family. As to quaternary structure, NDH-1 is composed of 14 different subunits. Subunits NuoA, H, J, K, L, M, N constitute the membrane sector of the complex.

It is found in the cell inner membrane. The catalysed reaction is a quinone + NADH + 5 H(+)(in) = a quinol + NAD(+) + 4 H(+)(out). Its function is as follows. NDH-1 shuttles electrons from NADH, via FMN and iron-sulfur (Fe-S) centers, to quinones in the respiratory chain. The immediate electron acceptor for the enzyme in this species is believed to be ubiquinone. Couples the redox reaction to proton translocation (for every two electrons transferred, four hydrogen ions are translocated across the cytoplasmic membrane), and thus conserves the redox energy in a proton gradient. The chain is NADH-quinone oxidoreductase subunit A 2 from Geobacter metallireducens (strain ATCC 53774 / DSM 7210 / GS-15).